A 445-amino-acid polypeptide reads, in one-letter code: Histamine H3 receptor (445 aa).

The Extracellular portion of the chain corresponds to 1 to 39; sequence MERAPPDGLMNASGALAGEAAAAGGARGFSAAWTAVLAA. N-linked (GlcNAc...) asparagine glycosylation occurs at Asn-11. A helical membrane pass occupies residues 40–60; it reads LMALLIVATVLGNALVMLAFV. The Cytoplasmic portion of the chain corresponds to 61–70; that stretch reads ADSSLRTQNN. Residues 71–91 form a helical membrane-spanning segment; sequence FFLLNLAISDFLVGAFCIPLY. Topologically, residues 92–108 are extracellular; that stretch reads VPYVLTGRWTFGRGLCK. The cysteines at positions 107 and 188 are disulfide-linked. Residues 109–129 traverse the membrane as a helical segment; the sequence is LWLVVDYLLCASSVFNIVLIS. Residues 130 to 156 lie on the Cytoplasmic side of the membrane; it reads YDRFLSVTRAVSYRAQQGDTRRAVRKM. Residues 157 to 177 form a helical membrane-spanning segment; sequence ALVWVLAFLLYGPAILSWEYL. Over 178–196 the chain is Extracellular; the sequence is SGGSSIPEGHCYAEFFYNW. The helical transmembrane segment at 197-217 threads the bilayer; it reads YFLITASTLEFFTPFLSVTFF. Topologically, residues 218–359 are cytoplasmic; it reads NLSIYLNIQR…LSRDKKVAKS (142 aa). Disordered regions lie at residues 234 to 259 and 273 to 336; these read DGGREAGPEPPPDAQPSPPPAPPSCW and HRYG…LEKR. The segment covering 241–256 has biased composition (pro residues); that stretch reads PEPPPDAQPSPPPAPP. Over residues 289–299 the composition is skewed to gly residues; it reads AGLGGGSGGGA. A compositionally biased stretch (low complexity) spans 300-312; the sequence is AASPTSSSGSSSR. A helical transmembrane segment spans residues 360–380; sequence LAIIVSIFGLCWAPYTLLMII. Residues 381 to 396 lie on the Extracellular side of the membrane; that stretch reads RAACHGHCVPDYWYET. The helical transmembrane segment at 397–417 threads the bilayer; sequence SFWLLWANSAVNPVLYPLCHY. Over 418-445 the chain is Cytoplasmic; that stretch reads SFRRAFTKLLCPQKLKVQPHGSLEQCWK. Ser-439 is subject to Phosphoserine.

It belongs to the G-protein coupled receptor 1 family.

The protein localises to the cell membrane. In terms of biological role, the H3 subclass of histamine receptors could mediate the histamine signals in CNS and peripheral nervous system. Signals through the inhibition of adenylate cyclase and displays high constitutive activity (spontaneous activity in the absence of agonist). The polypeptide is Histamine H3 receptor (Hrh3) (Mus musculus (Mouse)).